The primary structure comprises 327 residues: o-succinylbenzoate synthase (327 aa).

K110 acts as the Proton donor in catalysis. Residues D138, E165, and D188 each contribute to the Mg(2+) site. Catalysis depends on K212, which acts as the Proton acceptor.

This sequence belongs to the mandelate racemase/muconate lactonizing enzyme family. MenC type 1 subfamily. A divalent metal cation serves as cofactor.

It carries out the reaction (1R,6R)-6-hydroxy-2-succinyl-cyclohexa-2,4-diene-1-carboxylate = 2-succinylbenzoate + H2O. Its pathway is quinol/quinone metabolism; 1,4-dihydroxy-2-naphthoate biosynthesis; 1,4-dihydroxy-2-naphthoate from chorismate: step 4/7. It participates in quinol/quinone metabolism; menaquinone biosynthesis. Converts 2-succinyl-6-hydroxy-2,4-cyclohexadiene-1-carboxylate (SHCHC) to 2-succinylbenzoate (OSB). This is o-succinylbenzoate synthase from Mycobacterium marinum (strain ATCC BAA-535 / M).